We begin with the raw amino-acid sequence, 382 residues long: Succinyl-diaminopimelate desuccinylase (382 aa).

Histidine 73 lines the Zn(2+) pocket. Residue aspartate 75 is part of the active site. Aspartate 106 lines the Zn(2+) pocket. Glutamate 140 (proton acceptor) is an active-site residue. 3 residues coordinate Zn(2+): glutamate 141, glutamate 169, and histidine 355.

It belongs to the peptidase M20A family. DapE subfamily. As to quaternary structure, homodimer. The cofactor is Zn(2+). Co(2+) is required as a cofactor.

The enzyme catalyses N-succinyl-(2S,6S)-2,6-diaminopimelate + H2O = (2S,6S)-2,6-diaminopimelate + succinate. Its pathway is amino-acid biosynthesis; L-lysine biosynthesis via DAP pathway; LL-2,6-diaminopimelate from (S)-tetrahydrodipicolinate (succinylase route): step 3/3. Catalyzes the hydrolysis of N-succinyl-L,L-diaminopimelic acid (SDAP), forming succinate and LL-2,6-diaminopimelate (DAP), an intermediate involved in the bacterial biosynthesis of lysine and meso-diaminopimelic acid, an essential component of bacterial cell walls. In Saccharophagus degradans (strain 2-40 / ATCC 43961 / DSM 17024), this protein is Succinyl-diaminopimelate desuccinylase.